Here is a 346-residue protein sequence, read N- to C-terminus: UDP-N-acetylenolpyruvoylglucosamine reductase (346 aa).

The region spanning 18–189 (LRAQARAFIA…VSVVFALKTH (172 aa)) is the FAD-binding PCMH-type domain. Arginine 165 is a catalytic residue. The Proton donor role is filled by serine 240. Glutamate 336 is a catalytic residue.

This sequence belongs to the MurB family. Requires FAD as cofactor.

It is found in the cytoplasm. It catalyses the reaction UDP-N-acetyl-alpha-D-muramate + NADP(+) = UDP-N-acetyl-3-O-(1-carboxyvinyl)-alpha-D-glucosamine + NADPH + H(+). It functions in the pathway cell wall biogenesis; peptidoglycan biosynthesis. Cell wall formation. The polypeptide is UDP-N-acetylenolpyruvoylglucosamine reductase (Neisseria meningitidis serogroup A / serotype 4A (strain DSM 15465 / Z2491)).